The sequence spans 148 residues: UPF0260 protein KPK_1978 (148 aa).

Belongs to the UPF0260 family.

In Klebsiella pneumoniae (strain 342), this protein is UPF0260 protein KPK_1978.